A 355-amino-acid chain; its full sequence is MGCAMSNAADKEAAERSKKIDKDLRLAGERAAREVKLLLLGAGESGKSTIVKQMKIIHETGYSREECEQYRPVVYSNTIQSLMAIIRAMGQLKIDFRDSSRADDARHFFTLASAADEGELTPELANIMKRLWNESGVQHCRNRSREYQLNDTAAYYLNALDRIARPGYIPTQQDVLRTRVKTTGIVETNFSFKNLNFKLFDVGGQRSERKKWIHCFEGVTAIIFVVALSGYDLVLAEDEEMNRMIESMKLFDSICNNKWFVETSIILFLNKKDLFEQKITKSPLTICFPEYQGSNVYEDSANYIRMKFENLNKRKDQKEIYTHFTCATDTNNIQFVFDAVTDVIIKNNLKDCGLF.

G2 carries N-myristoyl glycine lipidation. A lipid anchor (S-palmitoyl cysteine) is attached at C3. The G-alpha domain maps to 33 to 355 (REVKLLLLGA…KNNLKDCGLF (323 aa)). Residues 36-49 (KLLLLGAGESGKST) are G1 motif. Residues 41-48 (GAGESGKS), 176-182 (LRTRVKT), 201-205 (DVGGQ), 270-273 (NKKD), and A327 contribute to the GTP site. S48 and T182 together coordinate Mg(2+). Positions 174-182 (DVLRTRVKT) are G2 motif. A G3 motif region spans residues 197–206 (FKLFDVGGQR). Residues 266 to 273 (ILFLNKKD) form a G4 motif region. A G5 motif region spans residues 325-330 (TCATDT).

It belongs to the G-alpha family. G(i/o/t/z) subfamily. In terms of assembly, g proteins are composed of 3 units; alpha, beta and gamma. The alpha chain contains the guanine nucleotide binding site.

In terms of biological role, guanine nucleotide-binding proteins (G proteins) are involved as modulators or transducers in various transmembrane signaling systems. This chain is Guanine nucleotide-binding protein G(i) subunit alpha, found in Homarus americanus (American lobster).